A 512-amino-acid polypeptide reads, in one-letter code: Probable capsid protein 4 (512 aa).

Belongs to the NCLDV major capsid protein family.

The protein resides in the virion. This is Probable capsid protein 4 from Acanthamoeba polyphaga mimivirus (APMV).